The following is a 371-amino-acid chain: Dihydroorotate dehydrogenase (quinone) (371 aa).

Residues 79–83 (AGFDK) and Thr103 contribute to the FMN site. A substrate-binding site is contributed by Lys83. Substrate is bound at residue 128–132 (NRMGF). FMN is bound by residues Asn156 and Asn189. Substrate is bound at residue Asn189. Ser192 acts as the Nucleophile in catalysis. Position 194 (Asn194) interacts with substrate. Residues Lys225 and Thr253 each contribute to the FMN site. 254–255 (NT) contacts substrate. FMN-binding positions include Gly279, Gly308, and 329 to 330 (YT).

This sequence belongs to the dihydroorotate dehydrogenase family. Type 2 subfamily. As to quaternary structure, monomer. FMN is required as a cofactor.

The protein localises to the cell membrane. It carries out the reaction (S)-dihydroorotate + a quinone = orotate + a quinol. It functions in the pathway pyrimidine metabolism; UMP biosynthesis via de novo pathway; orotate from (S)-dihydroorotate (quinone route): step 1/1. Its function is as follows. Catalyzes the conversion of dihydroorotate to orotate with quinone as electron acceptor. The chain is Dihydroorotate dehydrogenase (quinone) from Corynebacterium glutamicum (strain ATCC 13032 / DSM 20300 / JCM 1318 / BCRC 11384 / CCUG 27702 / LMG 3730 / NBRC 12168 / NCIMB 10025 / NRRL B-2784 / 534).